A 125-amino-acid polypeptide reads, in one-letter code: Holo-[acyl-carrier-protein] synthase (125 aa).

D8 and E57 together coordinate Mg(2+).

It belongs to the P-Pant transferase superfamily. AcpS family. Mg(2+) serves as cofactor.

It localises to the cytoplasm. The enzyme catalyses apo-[ACP] + CoA = holo-[ACP] + adenosine 3',5'-bisphosphate + H(+). Transfers the 4'-phosphopantetheine moiety from coenzyme A to a Ser of acyl-carrier-protein. This Laribacter hongkongensis (strain HLHK9) protein is Holo-[acyl-carrier-protein] synthase.